Reading from the N-terminus, the 519-residue chain is Probable pectinesterase/pectinesterase inhibitor 36 (519 aa).

The N-terminal stretch at 1-25 (MSTFVKVTDLITIMFFLAIAAVITA) is a signal peptide. The tract at residues 27-141 (NTAELDVLEM…TFVLHEALAF (115 aa)) is pectinesterase inhibitor 36. Residues asparagine 92 and asparagine 130 are each glycosylated (N-linked (GlcNAc...) asparagine). The interval 147–196 (GHMKKRLHGPARQGHGPTRPKHRPTRPNHGPGRSHHGPSRPNQNGGMLVS) is disordered. The span at 164–184 (TRPKHRPTRPNHGPGRSHHGP) shows a compositional bias: basic residues. Over residues 186–196 (RPNQNGGMLVS) the composition is skewed to polar residues. The interval 205-505 (DFVVARDGSA…FTVSRFIQGD (301 aa)) is pectinesterase 36. Positions 283 and 313 each coordinate substrate. The active-site Proton donor; for pectinesterase activity is the aspartate 336. The active-site Nucleophile; for pectinesterase activity is aspartate 357. Positions 425 and 427 each coordinate substrate.

This sequence in the N-terminal section; belongs to the PMEI family. It in the C-terminal section; belongs to the pectinesterase family. In terms of tissue distribution, expressed in siliques.

Its subcellular location is the secreted. It is found in the cell wall. It catalyses the reaction [(1-&gt;4)-alpha-D-galacturonosyl methyl ester](n) + n H2O = [(1-&gt;4)-alpha-D-galacturonosyl](n) + n methanol + n H(+). Its pathway is glycan metabolism; pectin degradation; 2-dehydro-3-deoxy-D-gluconate from pectin: step 1/5. Its function is as follows. Acts in the modification of cell walls via demethylesterification of cell wall pectin. This is Probable pectinesterase/pectinesterase inhibitor 36 (PME36) from Arabidopsis thaliana (Mouse-ear cress).